Consider the following 349-residue polypeptide: Dihydroorotase (349 aa).

2 residues coordinate Zn(2+): H17 and H19. Residues 19–21 (HLR) and N45 each bind substrate. Zn(2+) is bound by residues K105, H142, and H180. The residue at position 105 (K105) is an N6-carboxylysine. Residue H142 participates in substrate binding. A substrate-binding site is contributed by L225. D253 contacts Zn(2+). D253 is an active-site residue. H257 and A269 together coordinate substrate.

This sequence belongs to the metallo-dependent hydrolases superfamily. DHOase family. Class II DHOase subfamily. In terms of assembly, homodimer. Zn(2+) is required as a cofactor.

It carries out the reaction (S)-dihydroorotate + H2O = N-carbamoyl-L-aspartate + H(+). It participates in pyrimidine metabolism; UMP biosynthesis via de novo pathway; (S)-dihydroorotate from bicarbonate: step 3/3. Functionally, catalyzes the reversible cyclization of carbamoyl aspartate to dihydroorotate. The chain is Dihydroorotase from Nitrosomonas europaea (strain ATCC 19718 / CIP 103999 / KCTC 2705 / NBRC 14298).